Here is a 259-residue protein sequence, read N- to C-terminus: Deoxyribose-phosphate aldolase (259 aa).

Residue Asp102 is the Proton donor/acceptor of the active site. Lys167 serves as the catalytic Schiff-base intermediate with acetaldehyde. Lys201 functions as the Proton donor/acceptor in the catalytic mechanism.

Belongs to the DeoC/FbaB aldolase family. DeoC type 2 subfamily.

The protein resides in the cytoplasm. It carries out the reaction 2-deoxy-D-ribose 5-phosphate = D-glyceraldehyde 3-phosphate + acetaldehyde. Its pathway is carbohydrate degradation; 2-deoxy-D-ribose 1-phosphate degradation; D-glyceraldehyde 3-phosphate and acetaldehyde from 2-deoxy-alpha-D-ribose 1-phosphate: step 2/2. In terms of biological role, catalyzes a reversible aldol reaction between acetaldehyde and D-glyceraldehyde 3-phosphate to generate 2-deoxy-D-ribose 5-phosphate. The sequence is that of Deoxyribose-phosphate aldolase from Escherichia coli O45:K1 (strain S88 / ExPEC).